A 341-amino-acid chain; its full sequence is Follistatin (341 aa).

A signal peptide spans 1–29; sequence MLNERIQPGMIFLLTVSLCHFMEYRAVQA. Residues 30–103 form the TB domain; that stretch reads GNCWLQQSKN…TCENVDCGPG (74 aa). 8 disulfide bridges follow: C32/C55, C42/C88, C56/C91, C95/C106, C100/C116, C118/C150, C122/C143, and C132/C164. Residue N72 is glycosylated (N-linked (GlcNAc...) asparagine). The Follistatin-like 1 domain occupies 94 to 117; the sequence is TCENVDCGPGKKCKMNKKNKPRCV. Kazal-like domains follow at residues 100–166, 186–241, and 264–318; these read CGPG…KCKK, NAYC…KCIK, and RGRC…SCNS. N124 carries an N-linked (GlcNAc...) asparagine glycan. The region spanning 167–190 is the Follistatin-like 2 domain; it reads TCRDVLCPGSSSCVVDQTNNAYCV. 3 disulfide bridges follow: C192-C225, C196-C218, and C207-C239. Residues 244–268 form the Follistatin-like 3 domain; sequence SCEDIQCSAGKKCLWDSRVGRGRCA. Disulfide bonds link C270-C302, C274-C295, and C284-C316. An N-linked (GlcNAc...) asparagine glycan is attached at N288. Acidic residues predominate over residues 321–333; the sequence is EDTEEEEEEEEPD. A disordered region spans residues 321-341; it reads EDTEEEEEEEEPDYSFVISSW.

In terms of assembly, monomer. In terms of tissue distribution, spemann organizer and notochord.

It localises to the secreted. In terms of biological role, binds directly to activin and functions as an activin antagonist which plays a role in neural induction. The short isoform is a more potent inhibitor of activin than the long isoform. Specific inhibitor of the biosynthesis and secretion of pituitary follicle stimulating hormone (FSH). The chain is Follistatin (fst) from Xenopus laevis (African clawed frog).